Consider the following 466-residue polypeptide: Fumarate hydratase class II (466 aa).

Substrate contacts are provided by residues 100-102 (SGT), Arg128, 131-134 (HPND), 141-143 (SSN), and Thr189. Over residues 122-137 (GERGERRKVHPNDDVN) the composition is skewed to basic and acidic residues. Residues 122-143 (GERGERRKVHPNDDVNKGQSSN) are disordered. The active-site Proton donor/acceptor is the His190. The active site involves Ser320. Residues Ser321 and 326–328 (KVN) contribute to the substrate site.

It belongs to the class-II fumarase/aspartase family. Fumarase subfamily. Homotetramer.

The protein resides in the cytoplasm. It catalyses the reaction (S)-malate = fumarate + H2O. It functions in the pathway carbohydrate metabolism; tricarboxylic acid cycle; (S)-malate from fumarate: step 1/1. In terms of biological role, involved in the TCA cycle. Catalyzes the stereospecific interconversion of fumarate to L-malate. The protein is Fumarate hydratase class II of Myxococcus xanthus (strain DK1622).